We begin with the raw amino-acid sequence, 280 residues long: Putative pyruvate, phosphate dikinase regulatory protein (280 aa).

154–161 (GVSRTSKT) serves as a coordination point for ADP.

It belongs to the pyruvate, phosphate/water dikinase regulatory protein family. PDRP subfamily.

It catalyses the reaction N(tele)-phospho-L-histidyl/L-threonyl-[pyruvate, phosphate dikinase] + ADP = N(tele)-phospho-L-histidyl/O-phospho-L-threonyl-[pyruvate, phosphate dikinase] + AMP + H(+). The enzyme catalyses N(tele)-phospho-L-histidyl/O-phospho-L-threonyl-[pyruvate, phosphate dikinase] + phosphate + H(+) = N(tele)-phospho-L-histidyl/L-threonyl-[pyruvate, phosphate dikinase] + diphosphate. Its function is as follows. Bifunctional serine/threonine kinase and phosphorylase involved in the regulation of the pyruvate, phosphate dikinase (PPDK) by catalyzing its phosphorylation/dephosphorylation. This Nitrobacter hamburgensis (strain DSM 10229 / NCIMB 13809 / X14) protein is Putative pyruvate, phosphate dikinase regulatory protein.